Consider the following 483-residue polypeptide: Serine/threonine-protein kinase BSK4 (483 aa).

Gly-2 carries the N-myristoyl glycine lipid modification. The 267-residue stretch at 56-322 folds into the Protein kinase domain; that stretch reads ENVVSEHGET…DTEVLSHVLM (267 aa). ATP-binding positions include 62–70 and Lys-84; that span reads HGETAPNVV. Asp-178 functions as the Proton acceptor in the catalytic mechanism.

This sequence belongs to the protein kinase superfamily. Ser/Thr protein kinase family.

It is found in the cell membrane. It catalyses the reaction L-seryl-[protein] + ATP = O-phospho-L-seryl-[protein] + ADP + H(+). The catalysed reaction is L-threonyl-[protein] + ATP = O-phospho-L-threonyl-[protein] + ADP + H(+). Its function is as follows. Probable serine/threonine kinase that acts as a positive regulator of brassinosteroid (BR) signaling downstream of the receptor kinase BRI1. Functions redundantly with BSK3, BSK6, BSK7 and BSK8. In Arabidopsis thaliana (Mouse-ear cress), this protein is Serine/threonine-protein kinase BSK4.